The chain runs to 520 residues: Na(+)/H(+) antiporter NhaB (520 aa).

A run of 12 helical transmembrane segments spans residues 27 to 49, 62 to 82, 97 to 117, 120 to 140, 144 to 164, 202 to 222, 238 to 258, 303 to 323, 348 to 368, 391 to 411, 447 to 467, and 475 to 495; these read GFLI…LLVI, YPLL…MTSA, LLLI…LLIF, LLLG…AAAF, FLDA…FYGI, LMMH…VGEP, FLLR…VTCI, GLIG…VGLI, TEAL…AVII, LFYL…VGTV, ATPN…APLI, and VWMA…CVQF.

This sequence belongs to the NhaB Na(+)/H(+) (TC 2.A.34) antiporter family.

It is found in the cell inner membrane. It catalyses the reaction 2 Na(+)(in) + 3 H(+)(out) = 2 Na(+)(out) + 3 H(+)(in). Functionally, na(+)/H(+) antiporter that extrudes sodium in exchange for external protons. The sequence is that of Na(+)/H(+) antiporter NhaB from Cronobacter sakazakii (strain ATCC BAA-894) (Enterobacter sakazakii).